The sequence spans 313 residues: ADP-L-glycero-D-manno-heptose-6-epimerase (313 aa).

Residues 10 to 11, 31 to 32, Lys38, Lys53, 75 to 79, and Asn92 each bind NADP(+); these read MI, DN, and EGACS. The active-site Proton acceptor is the Tyr139. Lys143 is a binding site for NADP(+). Asn174 contributes to the substrate binding site. The NADP(+) site is built by Val175 and Lys183. Lys183 acts as the Proton acceptor in catalysis. Substrate contacts are provided by residues Ser185, His192, 206 to 209, Arg214, and Tyr277; that span reads FEGS.

It belongs to the NAD(P)-dependent epimerase/dehydratase family. HldD subfamily. As to quaternary structure, homopentamer. The cofactor is NADP(+).

It catalyses the reaction ADP-D-glycero-beta-D-manno-heptose = ADP-L-glycero-beta-D-manno-heptose. It functions in the pathway nucleotide-sugar biosynthesis; ADP-L-glycero-beta-D-manno-heptose biosynthesis; ADP-L-glycero-beta-D-manno-heptose from D-glycero-beta-D-manno-heptose 7-phosphate: step 4/4. Functionally, catalyzes the interconversion between ADP-D-glycero-beta-D-manno-heptose and ADP-L-glycero-beta-D-manno-heptose via an epimerization at carbon 6 of the heptose. The chain is ADP-L-glycero-D-manno-heptose-6-epimerase from Aliivibrio fischeri (strain ATCC 700601 / ES114) (Vibrio fischeri).